The primary structure comprises 150 residues: MTITQVKVKKLDNFFGKLPEYATDHSAGMDLTAANEQPITIKAGEIQLIPTGIAIALPELFEAQIRPRSGLAAKNGITVANSPGTIDADYRGEIKVILINLGKDDFVIEKGMRIAQMVISKYERISWKESETLEETARGSGGFGSTGVYL.

Substrate-binding positions include arginine 68–glycine 70, asparagine 81, threonine 85–aspartate 87, and lysine 95.

The protein belongs to the dUTPase family. The cofactor is Mg(2+).

The enzyme catalyses dUTP + H2O = dUMP + diphosphate + H(+). It participates in pyrimidine metabolism; dUMP biosynthesis; dUMP from dCTP (dUTP route): step 2/2. Functionally, this enzyme is involved in nucleotide metabolism: it produces dUMP, the immediate precursor of thymidine nucleotides and it decreases the intracellular concentration of dUTP so that uracil cannot be incorporated into DNA. The polypeptide is Deoxyuridine 5'-triphosphate nucleotidohydrolase (Rickettsia bellii (strain OSU 85-389)).